We begin with the raw amino-acid sequence, 271 residues long: Tryptophan synthase alpha chain (271 aa).

Catalysis depends on proton acceptor residues Glu49 and Asp60.

This sequence belongs to the TrpA family. In terms of assembly, tetramer of two alpha and two beta chains.

The catalysed reaction is (1S,2R)-1-C-(indol-3-yl)glycerol 3-phosphate + L-serine = D-glyceraldehyde 3-phosphate + L-tryptophan + H2O. It functions in the pathway amino-acid biosynthesis; L-tryptophan biosynthesis; L-tryptophan from chorismate: step 5/5. In terms of biological role, the alpha subunit is responsible for the aldol cleavage of indoleglycerol phosphate to indole and glyceraldehyde 3-phosphate. This Aromatoleum aromaticum (strain DSM 19018 / LMG 30748 / EbN1) (Azoarcus sp. (strain EbN1)) protein is Tryptophan synthase alpha chain.